A 262-amino-acid polypeptide reads, in one-letter code: Acyl-[acyl-carrier-protein]--UDP-N-acetylglucosamine O-acyltransferase (262 aa).

The protein belongs to the transferase hexapeptide repeat family. LpxA subfamily. As to quaternary structure, homotrimer.

It localises to the cytoplasm. The enzyme catalyses a (3R)-hydroxyacyl-[ACP] + UDP-N-acetyl-alpha-D-glucosamine = a UDP-3-O-[(3R)-3-hydroxyacyl]-N-acetyl-alpha-D-glucosamine + holo-[ACP]. It participates in glycolipid biosynthesis; lipid IV(A) biosynthesis; lipid IV(A) from (3R)-3-hydroxytetradecanoyl-[acyl-carrier-protein] and UDP-N-acetyl-alpha-D-glucosamine: step 1/6. Involved in the biosynthesis of lipid A, a phosphorylated glycolipid that anchors the lipopolysaccharide to the outer membrane of the cell. The sequence is that of Acyl-[acyl-carrier-protein]--UDP-N-acetylglucosamine O-acyltransferase from Salmonella paratyphi B (strain ATCC BAA-1250 / SPB7).